The following is a 183-amino-acid chain: Dual-action ribosomal maturation protein DarP (183 aa).

This sequence belongs to the DarP family.

Its subcellular location is the cytoplasm. Its function is as follows. Member of a network of 50S ribosomal subunit biogenesis factors which assembles along the 30S-50S interface, preventing incorrect 23S rRNA structures from forming. Promotes peptidyl transferase center (PTC) maturation. This is Dual-action ribosomal maturation protein DarP from Escherichia coli O6:H1 (strain CFT073 / ATCC 700928 / UPEC).